We begin with the raw amino-acid sequence, 221 residues long: 7-cyano-7-deazaguanine synthase (221 aa).

10–20 (FSGGQDSTTCL) lines the ATP pocket. 4 residues coordinate Zn(2+): C186, C195, C198, and C201.

The protein belongs to the QueC family. In terms of assembly, homodimer. Zn(2+) is required as a cofactor.

It carries out the reaction 7-carboxy-7-deazaguanine + NH4(+) + ATP = 7-cyano-7-deazaguanine + ADP + phosphate + H2O + H(+). The protein operates within purine metabolism; 7-cyano-7-deazaguanine biosynthesis. Catalyzes the ATP-dependent conversion of 7-carboxy-7-deazaguanine (CDG) to 7-cyano-7-deazaguanine (preQ(0)). The sequence is that of 7-cyano-7-deazaguanine synthase from Geobacillus thermodenitrificans (strain NG80-2).